Consider the following 118-residue polypeptide: Large ribosomal subunit protein bL19 (118 aa).

It belongs to the bacterial ribosomal protein bL19 family.

Functionally, this protein is located at the 30S-50S ribosomal subunit interface and may play a role in the structure and function of the aminoacyl-tRNA binding site. In Metamycoplasma arthritidis (strain 158L3-1) (Mycoplasma arthritidis), this protein is Large ribosomal subunit protein bL19.